Here is a 360-residue protein sequence, read N- to C-terminus: Peptide chain release factor 1 (360 aa).

Position 236 is an N5-methylglutamine (Q236).

The protein belongs to the prokaryotic/mitochondrial release factor family. In terms of processing, methylated by PrmC. Methylation increases the termination efficiency of RF1.

It localises to the cytoplasm. Peptide chain release factor 1 directs the termination of translation in response to the peptide chain termination codons UAG and UAA. The chain is Peptide chain release factor 1 from Ligilactobacillus salivarius (strain UCC118) (Lactobacillus salivarius).